The sequence spans 1476 residues: ABC-type transporter FG02316 (1476 aa).

A glycan (N-linked (GlcNAc...) asparagine) is linked at Asn-2. The next 10 helical transmembrane spans lie at 23 to 43 (FTLLFEESILVVPITALLLLA), 64 to 84 (WLYCKIILCLLLLASQIAFLV), 97 to 117 (SLPAAALSIVASITLLGLSYV), 156 to 176 (AAITALISTVVKILMLSAETI), 266 to 286 (ILFIIFPRLCFIGFTFCQPFL), 305 to 325 (QGYGLIGAWFLVFIGLAVTTG), 384 to 404 (VWANLIEIVIAVYLLGRQLGL), 407 to 427 (LIPVGAAIFSIVGSVIAVSFV), 485 to 505 (LLIWNMVLAYLAPIFAPVLSF), and 532 to 552 (LFALLQEPLASFVTSLSSFMG). Positions 274–552 (LCFIGFTFCQ…FVTSLSSFMG (279 aa)) constitute an ABC transmembrane type-1 1 domain. A disordered region spans residues 586–615 (ISGVSSSEEKHPVSPIQESMMKTEPSGDSP). The ABC transporter 1 domain maps to 622 to 847 (IRNASFGYDR…SDNYVSHSDV (226 aa)). Asn-624 carries N-linked (GlcNAc...) asparagine glycosylation. An ATP-binding site is contributed by 654-661 (GPVGSGKS). N-linked (GlcNAc...) asparagine glycosylation is found at Asn-682, Asn-696, Asn-798, and Asn-836. The disordered stretch occupies residues 842–870 (VSHSDVSSPDGARSKAPSSGPASSSAPVP). Residues 855-870 (SKAPSSGPASSSAPVP) show a composition bias toward low complexity. A run of 6 helical transmembrane segments spans residues 906 to 926 (MNAIGWIPTMVFVLAICAYIF), 950 to 970 (LGYYLGVYAMLGALSIIFLVL), 1021 to 1041 (LIDMDLPLSALNTFATFVLCI), 1045 to 1065 (ILIAVGSYYTAIAFPFLLATL), 1137 to 1157 (WLTLVLDMIVTIIAVLVVVLV), and 1167 to 1187 (GLIGVALVNIIQFSQHLKLLM). One can recognise an ABC transmembrane type-1 2 domain in the interval 916–1195 (VFVLAICAYI…LMTFWTTLET (280 aa)). An ABC transporter 2 domain is found at 1232–1464 (ILFDQVSAGY…GPDASTFASM (233 aa)). Asn-1250 carries an N-linked (GlcNAc...) asparagine glycan. 1265-1272 (GRTGSGKS) is an ATP binding site. A glycan (N-linked (GlcNAc...) asparagine) is linked at Asn-1414.

The protein belongs to the ABC transporter superfamily. ABCC family. Conjugate transporter (TC 3.A.1.208) subfamily.

The protein resides in the cell membrane. Functionally, ABC-type transporter; part of the gene cluster that mediates the biosynthesis of the fusahexin, a cyclic hydrophobic hexapeptide with the amino acid sequence cyclo-(D-Ala-L-Leu-D-allo-Thr-L-Pro-D-Leu-L-Leu) that plays an important role in cell surface hydrophobicity. This is ABC-type transporter FG02316 from Gibberella zeae (strain ATCC MYA-4620 / CBS 123657 / FGSC 9075 / NRRL 31084 / PH-1) (Wheat head blight fungus).